A 173-amino-acid polypeptide reads, in one-letter code: RNA polymerase sigma factor TcsR (173 aa).

The segment at 122 to 169 (IKDLTQNEKNIIRKIYLDRLRESEISRELNISRQAVNKTHLRALEKLK) is sigma-70 factor domain-4. The segment at residues 143–162 (ESEISRELNISRQAVNKTHL) is a DNA-binding region (H-T-H motif).

Belongs to the sigma-70 factor family.

In terms of biological role, sigma factors are initiation factors that promote the attachment of RNA polymerase to specific initiation sites and are then released. Transcriptional regulator specifically required to activate expression of the toxin gene locus, composed of tcsL, tcsH and tcdE/utxA. The sequence is that of RNA polymerase sigma factor TcsR from Paraclostridium sordellii (Clostridium sordellii).